The following is a 378-amino-acid chain: Succinyl-diaminopimelate desuccinylase (378 aa).

Histidine 68 is a Zn(2+) binding site. Aspartate 70 is a catalytic residue. Aspartate 102 is a Zn(2+) binding site. Glutamate 136 (proton acceptor) is an active-site residue. Residues glutamate 137, glutamate 165, and histidine 351 each contribute to the Zn(2+) site.

It belongs to the peptidase M20A family. DapE subfamily. As to quaternary structure, homodimer. It depends on Zn(2+) as a cofactor. Co(2+) is required as a cofactor.

The catalysed reaction is N-succinyl-(2S,6S)-2,6-diaminopimelate + H2O = (2S,6S)-2,6-diaminopimelate + succinate. Its pathway is amino-acid biosynthesis; L-lysine biosynthesis via DAP pathway; LL-2,6-diaminopimelate from (S)-tetrahydrodipicolinate (succinylase route): step 3/3. Catalyzes the hydrolysis of N-succinyl-L,L-diaminopimelic acid (SDAP), forming succinate and LL-2,6-diaminopimelate (DAP), an intermediate involved in the bacterial biosynthesis of lysine and meso-diaminopimelic acid, an essential component of bacterial cell walls. The chain is Succinyl-diaminopimelate desuccinylase from Pseudomonas syringae pv. syringae.